Consider the following 504-residue polypeptide: MSIKAEEISSIIKQQIENYHSELKVSDVGTVTYIGDGIARAHGLDNAMAGELLEFSNGVMGMAQNLETNDVGIIILGPYTEIREGDEVRRTGKIMEVPVGEALIGRVVNSLGQPVDGLGPIETTGTRPIEAVAPGVMQRQSVNEPLQTGIKAIDALVPIGRGQRELIIGDRQTGKTSVAIDTILNQADQDMICIYVAIGQKESTVRNAVETLRHHGALDYTIVVTAAASQPAPLLYLAPYAGVAMAEEFMYNGKHVLVVYDDLSKQAAAYRELSLLLRRPPGREAYPGDVFYLHSRLLERAAKLNDSLGGGSITALPFVETQAGDISAYIPTNVISITDGQIFLQSDLFFSGVRPAINAGLSVSRVGGSAQIKAMKTVAGTLRLDLAAYRELESFSQFGSDLDAATRAKLERGKRTVEVLKQDLHKPLKVEKQVLILYALVHKYLDDVPVHDVLRFESEMNTWFDHNRPELLEEIRTTKKLPDEAKLEAALKEFKNTFVPSEEK.

169 to 176 (GDRQTGKT) serves as a coordination point for ATP.

This sequence belongs to the ATPase alpha/beta chains family. In terms of assembly, F-type ATPases have 2 components, CF(1) - the catalytic core - and CF(0) - the membrane proton channel. CF(1) has five subunits: alpha(3), beta(3), gamma(1), delta(1), epsilon(1). CF(0) has three main subunits: a(1), b(2) and c(9-12). The alpha and beta chains form an alternating ring which encloses part of the gamma chain. CF(1) is attached to CF(0) by a central stalk formed by the gamma and epsilon chains, while a peripheral stalk is formed by the delta and b chains.

It localises to the cell membrane. The enzyme catalyses ATP + H2O + 4 H(+)(in) = ADP + phosphate + 5 H(+)(out). In terms of biological role, produces ATP from ADP in the presence of a proton gradient across the membrane. The alpha chain is a regulatory subunit. In Listeria welshimeri serovar 6b (strain ATCC 35897 / DSM 20650 / CCUG 15529 / CIP 8149 / NCTC 11857 / SLCC 5334 / V8), this protein is ATP synthase subunit alpha 2.